Consider the following 336-residue polypeptide: DNA polymerase III subunit delta' (336 aa).

DNA polymerase III contains a core (composed of alpha, epsilon and theta chains) that associates with a tau subunit. This core dimerizes to form the POLIII' complex. PolIII' associates with the gamma complex (composed of gamma, delta, delta', psi and chi chains) and with the beta chain to form the complete DNA polymerase III complex.

The enzyme catalyses DNA(n) + a 2'-deoxyribonucleoside 5'-triphosphate = DNA(n+1) + diphosphate. In terms of biological role, DNA polymerase III is a complex, multichain enzyme responsible for most of the replicative synthesis in bacteria. This DNA polymerase also exhibits 3' to 5' exonuclease activity. In Buchnera aphidicola subsp. Baizongia pistaciae (strain Bp), this protein is DNA polymerase III subunit delta' (holB).